We begin with the raw amino-acid sequence, 237 residues long: E3 protein (237 aa).

A compositionally biased stretch (acidic residues) spans 73 to 103; that stretch reads VEVVEDEEEEEAAEDVEEPTSEEDSEDEWEE. The interval 73-105 is disordered; it reads VEVVEDEEEEEAAEDVEEPTSEEDSEDEWEEGY.

Hypothesized to function in the shutoff of host biosyntheses. But it seems dispensable both for host shutoff and for phage multiplication. Its shutoff function is probably not entirely specific to host activities. The protein is E3 protein (44) of Bacillus phage SP01 (Bacteriophage SP01).